We begin with the raw amino-acid sequence, 229 residues long: 2-C-methyl-D-erythritol 4-phosphate cytidylyltransferase (229 aa).

Belongs to the IspD/TarI cytidylyltransferase family. IspD subfamily.

It catalyses the reaction 2-C-methyl-D-erythritol 4-phosphate + CTP + H(+) = 4-CDP-2-C-methyl-D-erythritol + diphosphate. It functions in the pathway isoprenoid biosynthesis; isopentenyl diphosphate biosynthesis via DXP pathway; isopentenyl diphosphate from 1-deoxy-D-xylulose 5-phosphate: step 2/6. Its function is as follows. Catalyzes the formation of 4-diphosphocytidyl-2-C-methyl-D-erythritol from CTP and 2-C-methyl-D-erythritol 4-phosphate (MEP). The chain is 2-C-methyl-D-erythritol 4-phosphate cytidylyltransferase from Clostridium botulinum (strain Langeland / NCTC 10281 / Type F).